We begin with the raw amino-acid sequence, 190 residues long: Lipid A acyltransferase PagP (190 aa).

The N-terminal stretch at 1–18 (MKRLISCLTIICALNASA) is a signal peptide. Residues H60, D103, and S104 contribute to the active site.

Belongs to the lipid A palmitoyltransferase family. Homodimer.

It is found in the cell outer membrane. It catalyses the reaction a lipid A + a 1,2-diacyl-sn-glycero-3-phosphocholine = a hepta-acyl lipid A + a 2-acyl-sn-glycero-3-phosphocholine. It carries out the reaction a lipid IVA + a 1,2-diacyl-sn-glycero-3-phosphocholine = a lipid IVB + a 2-acyl-sn-glycero-3-phosphocholine. The enzyme catalyses a lipid IIA + a 1,2-diacyl-sn-glycero-3-phosphocholine = a lipid IIB + a 2-acyl-sn-glycero-3-phosphocholine. Transfers a fatty acid residue from the sn-1 position of a phospholipid to the N-linked hydroxyfatty acid chain on the proximal unit of lipid A or its precursors. The sequence is that of Lipid A acyltransferase PagP from Legionella pneumophila (strain Paris).